The chain runs to 579 residues: Peptidoglycan D,D-transpeptidase FtsI (579 aa).

Residues 15 to 35 (FCVIVGLLLAMVGAIVWRIVD) traverse the membrane as a helical segment. The active-site Acyl-ester intermediate is the Ser294. A disordered region spans residues 558–579 (DNLPTATEQQQVNAAPAKGGRG). Residues 561–570 (PTATEQQQVN) are compositionally biased toward polar residues.

The protein belongs to the transpeptidase family. FtsI subfamily.

The protein localises to the cell inner membrane. The catalysed reaction is Preferential cleavage: (Ac)2-L-Lys-D-Ala-|-D-Ala. Also transpeptidation of peptidyl-alanyl moieties that are N-acyl substituents of D-alanine.. Its pathway is cell wall biogenesis; peptidoglycan biosynthesis. Catalyzes cross-linking of the peptidoglycan cell wall at the division septum. Binds penicillin. The protein is Peptidoglycan D,D-transpeptidase FtsI of Pseudomonas aeruginosa (strain ATCC 15692 / DSM 22644 / CIP 104116 / JCM 14847 / LMG 12228 / 1C / PRS 101 / PAO1).